Consider the following 399-residue polypeptide: Homeobox protein ceh-39 (399 aa).

Disordered regions lie at residues 32 to 91 (PEPA…GDTE) and 158 to 187 (AKKSRGRTAPRTPKSLETSKPGRGVKRPAS). Positions 60-79 (SSMCGSSSSSSSSSYSSGSS) are enriched in low complexity. Positions 205–291 (NRQIGDDEEL…VRRALCFMKK (87 aa)) form a DNA-binding region, CUT. Residues 315–374 (SDERIRRFTFTQTQLDSLHTVFQQQDRPNREMQQALSATLKLNRSTVGNFFMNARRRLPK) constitute a DNA-binding region (homeobox).

This sequence belongs to the CUT homeobox family. As to expression, expressed in hermaphrodite gonads.

The protein resides in the nucleus. Its subcellular location is the chromosome. In terms of biological role, transcriptional regulator which is involved in the sex determination and X chromosome dosage compensation pathways. Directly binds to 5'-ATTGAT-3' sites in the promoter of sex-determining factor xol-1 to negatively regulate its expression and promote hermaphrodite development. Associates with condensed DNA during mitosis. This Caenorhabditis elegans protein is Homeobox protein ceh-39.